Consider the following 303-residue polypeptide: Bifunctional protein FolD (303 aa).

Residues 168–170, T197, and V238 each bind NADP(+); that span reads GRS.

The protein belongs to the tetrahydrofolate dehydrogenase/cyclohydrolase family. In terms of assembly, homodimer.

It carries out the reaction (6R)-5,10-methylene-5,6,7,8-tetrahydrofolate + NADP(+) = (6R)-5,10-methenyltetrahydrofolate + NADPH. The enzyme catalyses (6R)-5,10-methenyltetrahydrofolate + H2O = (6R)-10-formyltetrahydrofolate + H(+). It participates in one-carbon metabolism; tetrahydrofolate interconversion. In terms of biological role, catalyzes the oxidation of 5,10-methylenetetrahydrofolate to 5,10-methenyltetrahydrofolate and then the hydrolysis of 5,10-methenyltetrahydrofolate to 10-formyltetrahydrofolate. The sequence is that of Bifunctional protein FolD from Desulfosudis oleivorans (strain DSM 6200 / JCM 39069 / Hxd3) (Desulfococcus oleovorans).